Here is a 376-residue protein sequence, read N- to C-terminus: Chaperone protein DnaJ (376 aa).

A J domain is found at 4–70; it reads DYYQILGVSK…QKRAAYDRFG (67 aa). The CR-type zinc finger occupies 139–217; sequence GVEKNISFSS…CHGLGRYHKQ (79 aa). Residues Cys152, Cys155, Cys169, Cys172, Cys191, Cys194, Cys205, and Cys208 each contribute to the Zn(2+) site. CXXCXGXG motif repeat units follow at residues 152 to 159, 169 to 176, 191 to 198, and 205 to 212; these read CDTCHGSG, CDACGGVG, CHKCQGNG, and CKKCHGLG.

Belongs to the DnaJ family. In terms of assembly, homodimer. It depends on Zn(2+) as a cofactor.

The protein resides in the cytoplasm. Functionally, participates actively in the response to hyperosmotic and heat shock by preventing the aggregation of stress-denatured proteins and by disaggregating proteins, also in an autonomous, DnaK-independent fashion. Unfolded proteins bind initially to DnaJ; upon interaction with the DnaJ-bound protein, DnaK hydrolyzes its bound ATP, resulting in the formation of a stable complex. GrpE releases ADP from DnaK; ATP binding to DnaK triggers the release of the substrate protein, thus completing the reaction cycle. Several rounds of ATP-dependent interactions between DnaJ, DnaK and GrpE are required for fully efficient folding. Also involved, together with DnaK and GrpE, in the DNA replication of plasmids through activation of initiation proteins. In Rickettsia bellii (strain RML369-C), this protein is Chaperone protein DnaJ.